We begin with the raw amino-acid sequence, 102 residues long: PE family immunomodulator PE5 (102 aa).

Positions 3 to 92 constitute a PE domain; that stretch reads LRVVPEGLAA…GASYLAGDAA (90 aa).

Belongs to the mycobacterial PE family.

The protein localises to the secreted. The protein resides in the cell envelope. Its subcellular location is the cell surface. Important for the siderophore-mediated iron-acquisition function of ESX-3. May play a pivotal role in the evasion of host immune response by M.tuberculosis. Mediates production of IL-10 via activation of the p38 and ERK1/2 mitogen-activated protein kinase (MAPK) signaling pathways. This is PE family immunomodulator PE5 from Mycobacterium tuberculosis (strain ATCC 25618 / H37Rv).